Here is a 113-residue protein sequence, read N- to C-terminus: Phosphoribosyl-ATP pyrophosphatase (113 aa).

It belongs to the PRA-PH family.

Its subcellular location is the cytoplasm. It carries out the reaction 1-(5-phospho-beta-D-ribosyl)-ATP + H2O = 1-(5-phospho-beta-D-ribosyl)-5'-AMP + diphosphate + H(+). Its pathway is amino-acid biosynthesis; L-histidine biosynthesis; L-histidine from 5-phospho-alpha-D-ribose 1-diphosphate: step 2/9. The sequence is that of Phosphoribosyl-ATP pyrophosphatase from Janthinobacterium sp. (strain Marseille) (Minibacterium massiliensis).